Reading from the N-terminus, the 207-residue chain is Small ribosomal subunit protein uS4 (207 aa).

The disordered stretch occupies residues 31 to 56; it reads KCKLDSKPGQHGRTSGARTSDYGNQL. Residues 42–53 show a composition bias toward polar residues; the sequence is GRTSGARTSDYG. An S4 RNA-binding domain is found at 97–157; the sequence is TRLDNVVYRM…EKSKKQVRIV (61 aa).

Belongs to the universal ribosomal protein uS4 family. In terms of assembly, part of the 30S ribosomal subunit. Contacts protein S5. The interaction surface between S4 and S5 is involved in control of translational fidelity.

Its function is as follows. One of the primary rRNA binding proteins, it binds directly to 16S rRNA where it nucleates assembly of the body of the 30S subunit. With S5 and S12 plays an important role in translational accuracy. The sequence is that of Small ribosomal subunit protein uS4 from Herminiimonas arsenicoxydans.